Reading from the N-terminus, the 245-residue chain is Probable transcriptional regulatory protein TP_0474 (245 aa).

The protein belongs to the TACO1 family.

The protein resides in the cytoplasm. The sequence is that of Probable transcriptional regulatory protein TP_0474 from Treponema pallidum (strain Nichols).